A 426-amino-acid polypeptide reads, in one-letter code: Adenylosuccinate synthetase (426 aa).

GTP contacts are provided by residues 18-24 and 46-48; these read GDEGKGK and GHT. Residue D19 is the Proton acceptor of the active site. Positions 19 and 46 each coordinate Mg(2+). IMP is bound by residues 19 to 22, 44 to 47, T136, R150, Q222, T237, and R301; these read DEGK and NAGH. H47 serves as the catalytic Proton donor. 297–303 serves as a coordination point for substrate; the sequence is VTTKRKR. GTP contacts are provided by residues R303, 329–331, and 413–415; these read KID and GTG.

Belongs to the adenylosuccinate synthetase family. Homodimer. Requires Mg(2+) as cofactor.

The protein localises to the cytoplasm. The enzyme catalyses IMP + L-aspartate + GTP = N(6)-(1,2-dicarboxyethyl)-AMP + GDP + phosphate + 2 H(+). It participates in purine metabolism; AMP biosynthesis via de novo pathway; AMP from IMP: step 1/2. In terms of biological role, plays an important role in the de novo pathway and in the salvage pathway of purine nucleotide biosynthesis. Catalyzes the first committed step in the biosynthesis of AMP from IMP. This chain is Adenylosuccinate synthetase, found in Schistosoma mansoni (Blood fluke).